The sequence spans 107 residues: Small ribosomal subunit protein uS17 (107 aa).

Belongs to the universal ribosomal protein uS17 family. In terms of assembly, part of the 30S ribosomal subunit.

Functionally, one of the primary rRNA binding proteins, it binds specifically to the 5'-end of 16S ribosomal RNA. This Aquifex aeolicus (strain VF5) protein is Small ribosomal subunit protein uS17.